The chain runs to 742 residues: MDAARDGRPERRPRRSGTYRTHPFQRPSARRSLLDALRAADAEAAERPRVRRPRPDFQRPPDEDTSEDENVYDYIDGDSSDSADDYDSDYFTANRGPNHGAGDAMDTDAPPERAPEGGAPQDYLTAHLRAIEALPESAPHRSLLERTARTVYAHEFPPRDLSAGSRAPAQRARRSLRGFPRGGGGGQEPGPDDEGDDAADLREDLVPDEAYAHLERDERLSEGPPLLNMEAAAAAAGERSVVEELFTYAPAQPQVEVPLPRILEGRVRPSAFFAQMPLDALCRTPPNDQRVVRERRAWDMAGTPHGLLITTWSTVDPEFSIGGMYVGAPEGTRPRLVWRRAMKQAMALQYRLGVGGLCRAVDGARMPPTEALLFLAARAAARSAQLPFFVAAGARGRRRAAPARGGGWAAGSHAVHATGRVPHATLFRGSMGSLIYWHELRVMLTAVPALCARYAGAGLQSAELYLLALRHSEAPGYTANERYALSAYLTLFVALAERAVRWLYLAGAHLLGPHPTAAAFREVRAKIPYERLPLGSATLHDAEVETVDSATFQEALAFSALAHVYGEAYVAVRTATTLLMAEYAAHAERRDVREMTAAFLGVGLIAQRLMGSLEPAAELRSRRSGVRGPACPTVREGTLARYSLLADAALPLVRPVSLVEFWEARDGVMRELRLRPVASPPLAGKRRVMELYLSLDSIEALVGREPLGSRPVLGPLVDIAEALADHPHLVTGDGRGPRLGGR.

Over residues 1–10 (MDAARDGRPE) the composition is skewed to basic and acidic residues. Disordered stretches follow at residues 1-128 (MDAA…TAHL) and 155-199 (EFPP…DDAA). The short motif at 10–30 (ERRPRRSGTYRTHPFQRPSAR) is the Nuclear localization signal element. Residues 18 to 37 (TYRTHPFQRPSARRSLLDAL) are compositionally biased toward low complexity. Residues 38–62 (RAADAEAAERPRVRRPRPDFQRPPD) show a composition bias toward basic and acidic residues. Residues 63-88 (EDTSEDENVYDYIDGDSSDSADDYDS) are compositionally biased toward acidic residues. A Nuclear export signal motif is present at residues 95–122 (RGPNHGAGDAMDTDAPPERAPEGGAPQD). The short motif at 485-495 (LSAYLTLFVAL) is the Nuclear export signal element.

The protein belongs to the alphaherpesvirinae HHV-1 UL47 family. Interacts with US3 kinase. Interacts with UL31 and UL34; these interactions seem important for efficient virion nuclear egress. Interacts with UL41/VHS. In terms of processing, phosphorylated by US3. This phosphorylation is required for proper nuclear localization.

The protein localises to the virion tegument. It is found in the host nucleus. It localises to the host cytoplasm. Its function is as follows. Tegument protein that can bind to various RNA transcripts. Plays a role in the attenuation of selective viral and cellular mRNA degradation by modulating the activity of host shutoff RNase UL41/VHS. Also plays a role in the primary envelopment of virions in the perinuclear space, probably by interacting with two nuclear egress proteins UL31 and UL34. The chain is Tegument protein UL47 from Bos taurus (Bovine).